The chain runs to 211 residues: Protein GrpE (211 aa).

A disordered region spans residues 1 to 43; the sequence is MTDETTKNGPDATAADAAADAAANVEIDNSVQEEAKQPDPLEL. A compositionally biased stretch (low complexity) spans 11-23; that stretch reads DATAADAAADAAA. Over residues 33–43 the composition is skewed to basic and acidic residues; sequence EEAKQPDPLEL.

It belongs to the GrpE family. As to quaternary structure, homodimer.

The protein resides in the cytoplasm. In terms of biological role, participates actively in the response to hyperosmotic and heat shock by preventing the aggregation of stress-denatured proteins, in association with DnaK and GrpE. It is the nucleotide exchange factor for DnaK and may function as a thermosensor. Unfolded proteins bind initially to DnaJ; upon interaction with the DnaJ-bound protein, DnaK hydrolyzes its bound ATP, resulting in the formation of a stable complex. GrpE releases ADP from DnaK; ATP binding to DnaK triggers the release of the substrate protein, thus completing the reaction cycle. Several rounds of ATP-dependent interactions between DnaJ, DnaK and GrpE are required for fully efficient folding. The chain is Protein GrpE from Rhizobium etli (strain ATCC 51251 / DSM 11541 / JCM 21823 / NBRC 15573 / CFN 42).